The primary structure comprises 190 residues: Cancer-related nucleoside-triphosphatase homolog (190 aa).

An N-acetylalanine modification is found at Ala-2. Residues 9 to 16 (GPPGVGKT) and 109 to 116 (ICVIDEVG) contribute to the ATP site. An N6-acetyllysine modification is found at Lys-165.

It belongs to the THEP1 NTPase family. As to quaternary structure, monomer.

The enzyme catalyses a ribonucleoside 5'-triphosphate + H2O = a ribonucleoside 5'-diphosphate + phosphate + H(+). It catalyses the reaction 5-methyl-UTP + H2O = 5-methyl-UDP + phosphate + H(+). The catalysed reaction is CTP + H2O = CDP + phosphate + H(+). It carries out the reaction ATP + H2O = ADP + phosphate + H(+). The enzyme catalyses GTP + H2O = GDP + phosphate + H(+). In terms of biological role, has nucleotide phosphatase activity towards ATP, GTP, CTP, TTP and UTP. Hydrolyzes nucleoside diphosphates with lower efficiency. This Bos taurus (Bovine) protein is Cancer-related nucleoside-triphosphatase homolog (NTPCR).